The following is an 846-amino-acid chain: Major vault protein beta (846 aa).

An N-acetylalanine modification is found at A2. MVP repeat units follow at residues A2 to R60, Q61 to P115, L116 to R172, A173 to Q225, A226 to K280, A281 to V332, N333 to R388, I389 to V458, and I459 to P521.

The vault ribonucleoprotein particle is a huge (400 A x 670 A) cage structure of 12.9 MDa. It consists of a dimer of half-vaults, with each half-vault comprising 39 identical major vault protein (MVP) chains. Dictyostelium is one of the few organisms in which the major component is actually two proteins (alpha and beta).

It is found in the cytoplasm. The protein localises to the nucleus. In terms of biological role, unknown, though MVP-beta is required for normal vault structure. In Dictyostelium discoideum (Social amoeba), this protein is Major vault protein beta (mvpB).